Consider the following 523-residue polypeptide: Signal peptide peptidase-like 3 (523 aa).

Positions 1 to 35 are cleaved as a signal peptide; the sequence is MAFPAPSSSSPRRRGRGLAYLLVSVLLLASRVPGA. At 36–207 the chain is on the lumenal side; the sequence is AGADSEFEDG…EKPSFDGAIP (172 aa). The 73-residue stretch at 110–182 folds into the PA domain; that stretch reads SAPLASSIAV…SQSAGRKILS (73 aa). Asparagine 159 carries an N-linked (GlcNAc...) asparagine glycan. Residues 208–228 form a helical membrane-spanning segment; it reads FLWLMAVGSVACASVWSFVVV. Topologically, residues 229–254 are cytoplasmic; the sequence is GDEDKNAPTLGGEEAADSEIVELQTK. A helical transmembrane segment spans residues 255 to 272; it reads TALVFIVTASLVLLFLFF. Topologically, residues 273–275 are lumenal; that stretch reads FKS. A helical membrane pass occupies residues 276–298; it reads TWSAWLLVVLFCLSGLQGLHYVA. Over 299–321 the chain is Cytoplasmic; it reads STLIVRTCDRCREAKVALPVLGN. Residues 322–342 form a helical membrane-spanning segment; the sequence is VTVVTLVILPLALIFVVVWAV. Residues 343 to 347 are Lumenal-facing; the sequence is HQNSP. The chain crosses the membrane as a helical span at residues 348-368; sequence FAWVGQDLMGICMMILVLQVV. Residues 369-377 lie on the Cytoplasmic side of the membrane; that stretch reads HLPNIKVAT. The helical transmembrane segment at 378 to 398 threads the bilayer; that stretch reads ALLVSAFMYDIFWVFISPFIF. Residue aspartate 387 is part of the active site. The Lumenal portion of the chain corresponds to 399-430; it reads KKSVMITVARGSDEGPSLPMVLKMPKEFDTWN. The helical transmembrane segment at 431-451 threads the bilayer; the sequence is GYDMIGFGDILFPGLLVAFSF. The active site involves aspartate 439. Topologically, residues 452–465 are cytoplasmic; the sequence is RYDRANGKDLTDGY. Residues 466-486 traverse the membrane as a helical segment; sequence FLCLMIGYAFGLSCTYVGLYL. The Lumenal portion of the chain corresponds to 487–489; the sequence is MKS. A helical membrane pass occupies residues 490 to 510; the sequence is GQPALLYLVPSTLGTIVTLGA. Residues 492-494 carry the PAL motif; the sequence is PAL. The Cytoplasmic portion of the chain corresponds to 511–523; the sequence is KRGELSQLWNAKV.

The protein belongs to the peptidase A22B family. Glycosylated.

It localises to the endosome membrane. Intramembrane-cleaving aspartic protease (I-CLiP) that cleaves type II membrane signal peptides in the hydrophobic plane of the membrane. The polypeptide is Signal peptide peptidase-like 3 (SPPL3) (Oryza sativa subsp. japonica (Rice)).